An 87-amino-acid polypeptide reads, in one-letter code: Probable acyl carrier protein PigG (87 aa).

One can recognise a Carrier domain in the interval 1–78 (MLESKLINHI…SMVALVQRLK (78 aa)). Position 36 is an O-(pantetheine 4'-phosphoryl)serine (Ser36).

The protein operates within antibiotic biosynthesis; prodigiosin biosynthesis. In terms of biological role, involved in the biosynthesis of 4-methoxy-2,2'-bipyrrole-5-carbaldehyde (MBC), one of the terminal products involved in the biosynthesis of the red antibiotic prodigiosin (Pig). Carrier of the L-prolyl group transferred from L-prolyl-AMP by PigI. In Serratia sp. (strain ATCC 39006) (Prodigiosinella confusarubida), this protein is Probable acyl carrier protein PigG.